Consider the following 591-residue polypeptide: V-type ATP synthase alpha chain (591 aa).

Position 242–249 (242–249 (GPFGAGKT)) interacts with ATP.

The protein belongs to the ATPase alpha/beta chains family.

It catalyses the reaction ATP + H2O + 4 H(+)(in) = ADP + phosphate + 5 H(+)(out). Functionally, produces ATP from ADP in the presence of a proton gradient across the membrane. The V-type alpha chain is a catalytic subunit. The protein is V-type ATP synthase alpha chain of Chlamydia abortus (strain DSM 27085 / S26/3) (Chlamydophila abortus).